The primary structure comprises 98 residues: Essential MCU regulator, mitochondrial (98 aa).

A helical membrane pass occupies residues 52-72 (ITPFGLFGIIATVIPGLLIGA).

This sequence belongs to the SMDT1/EMRE family.

The protein resides in the mitochondrion inner membrane. Essential regulatory subunit of the mitochondrial calcium uniporter (mcu) channel, a protein that mediates calcium uptake into mitochondria. This is Essential MCU regulator, mitochondrial from Anopheles gambiae (African malaria mosquito).